The sequence spans 245 residues: DNA polymerase sliding clamp (245 aa).

It belongs to the PCNA family. In terms of assembly, homotrimer. The subunits circularize to form a toroid; DNA passes through its center. Replication factor C (RFC) is required to load the toroid on the DNA.

In terms of biological role, sliding clamp subunit that acts as a moving platform for DNA processing. Responsible for tethering the catalytic subunit of DNA polymerase and other proteins to DNA during high-speed replication. This Picrophilus torridus (strain ATCC 700027 / DSM 9790 / JCM 10055 / NBRC 100828 / KAW 2/3) protein is DNA polymerase sliding clamp.